A 190-amino-acid chain; its full sequence is uncharacterized protein (190 aa).

One can recognise a Macro domain in the interval 1–185 (MITMFKIVRG…LALETIGLGD (185 aa)).

This is an uncharacterized protein from Pyrococcus horikoshii (strain ATCC 700860 / DSM 12428 / JCM 9974 / NBRC 100139 / OT-3).